A 467-amino-acid polypeptide reads, in one-letter code: Dynactin subunit 4 (467 aa).

Ala2 carries the N-acetylalanine modification. Lys222 participates in a covalent cross-link: Glycyl lysine isopeptide (Lys-Gly) (interchain with G-Cter in SUMO2). Thr414 bears the Phosphothreonine mark.

The protein belongs to the dynactin subunit 4 family. As to quaternary structure, subunit of dynactin, a multiprotein complex part of a tripartite complex with dynein and a adapter, such as BICDL1, BICD2 or HOOK3. The dynactin complex is built around ACTR1A/ACTB filament and consists of an actin-related filament composed of a shoulder domain, a pointed end and a barbed end. Its length is defined by its flexible shoulder domain. The soulder is composed of 2 DCTN1 subunits, 4 DCTN2 and 2 DCTN3. The 4 DCNT2 (via N-terminus) bind the ACTR1A filament and act as molecular rulers to determine the length. The pointed end is important for binding dynein-dynactin cargo adapters. Consists of 4 subunits: ACTR10, DCNT4, DCTN5 and DCTN6. The barbed end is composed of a CAPZA1:CAPZB heterodimers, which binds ACTR1A/ACTB filament and dynactin and stabilizes dynactin. Interacts with ATP7B, but not ATP7A, in a copper-dependent manner. Interacts with ANK2; this interaction is required for localization at costameres. Interacts with N4BP2L1.

Its subcellular location is the cytoplasm. The protein resides in the cytoskeleton. The protein localises to the microtubule organizing center. It is found in the centrosome. It localises to the stress fiber. Its subcellular location is the cell cortex. The protein resides in the myofibril. The protein localises to the sarcomere. In terms of biological role, part of the dynactin complex that activates the molecular motor dynein for ultra-processive transport along microtubules. Together with dynein is involved in spindle assembly and cytokinesis. The chain is Dynactin subunit 4 (DCTN4) from Sus scrofa (Pig).